A 351-amino-acid polypeptide reads, in one-letter code: Adenine deaminase (351 aa).

Zn(2+)-binding residues include His20, His22, and His200. Glu203 acts as the Proton donor in catalysis. Asp281 contacts Zn(2+). Asp282 is a binding site for substrate.

The protein belongs to the metallo-dependent hydrolases superfamily. Adenosine and AMP deaminases family. Adenine deaminase type 2 subfamily. The cofactor is Zn(2+).

The enzyme catalyses adenine + H2O + H(+) = hypoxanthine + NH4(+). Functionally, catalyzes the hydrolytic deamination of adenine to hypoxanthine. Plays an important role in the purine salvage pathway and in nitrogen catabolism. The protein is Adenine deaminase of Cupriavidus pinatubonensis (strain JMP 134 / LMG 1197) (Cupriavidus necator (strain JMP 134)).